The chain runs to 137 residues: uncharacterized protein (137 aa).

This is an uncharacterized protein from Archaeoglobus fulgidus (strain ATCC 49558 / DSM 4304 / JCM 9628 / NBRC 100126 / VC-16).